We begin with the raw amino-acid sequence, 122 residues long: Large ribosomal subunit protein uL14 (122 aa).

It belongs to the universal ribosomal protein uL14 family. Part of the 50S ribosomal subunit. Forms a cluster with proteins L3 and L19. In the 70S ribosome, L14 and L19 interact and together make contacts with the 16S rRNA in bridges B5 and B8. Can interact with ribosomal silencing factor RsfS, which may inhibit ribosomal subunit association.

Binds to 23S rRNA. Forms part of two intersubunit bridges in the 70S ribosome. The polypeptide is Large ribosomal subunit protein uL14 (Synechocystis sp. (strain ATCC 27184 / PCC 6803 / Kazusa)).